Here is a 356-residue protein sequence, read N- to C-terminus: MTKIAFTGGGTVGHVSVNLSLIPTALSQGYEALYIGSKNGIEREMIESQLPEIKYYPISSGKLRRYISLENAKDVFKVLKGILDARKVLKKEKPDLLFSKGGFVSVPVVIAAKSLNIPTIIHESDLTPGLANKIALKFAKKIYTTFEETLNYLPKEKADFIGATIREDLKNGNAHNGYQLTGFNENKKVLLVMGGSLGSKKLNSIIRENLDALLQQYQVIHLTGKGLKDAQVKKSGYIQYEFVKEDLTDLLAITDTVISRAGSNAIYEFLTLRIPMLLVPLGLDQSRGDQIDNANHFADKGYAKAIDEEQLTAQILLQELNEMEQERTRIINNMKSYEQSYTKEALFDKMIKDALN.

Residues Arg166, Ser196, and Gln290 each coordinate UDP-N-acetyl-alpha-D-glucosamine.

Belongs to the glycosyltransferase 28 family. MurG subfamily.

It localises to the cell membrane. The catalysed reaction is Mur2Ac(oyl-L-Ala-gamma-D-Glu-L-Lys-D-Ala-D-Ala)-di-trans,octa-cis-undecaprenyl diphosphate + UDP-N-acetyl-alpha-D-glucosamine = beta-D-GlcNAc-(1-&gt;4)-Mur2Ac(oyl-L-Ala-gamma-D-Glu-L-Lys-D-Ala-D-Ala)-di-trans,octa-cis-undecaprenyl diphosphate + UDP + H(+). It participates in cell wall biogenesis; peptidoglycan biosynthesis. Its function is as follows. Cell wall formation. Catalyzes the transfer of a GlcNAc subunit on undecaprenyl-pyrophosphoryl-MurNAc-pentapeptide (lipid intermediate I) to form undecaprenyl-pyrophosphoryl-MurNAc-(pentapeptide)GlcNAc (lipid intermediate II). The sequence is that of UDP-N-acetylglucosamine--N-acetylmuramyl-(pentapeptide) pyrophosphoryl-undecaprenol N-acetylglucosamine transferase from Staphylococcus aureus (strain MW2).